The chain runs to 434 residues: MTVAISNPAAPPVSARAYLSVIGGTCALLCTVGFVVAFGVFQGYYTEHLLRGMSEFDIPWIGSASIFLLYVSAPICGVLVDRFGPKVLLIAGSIGVLVAIFMISLCSQYYQIFLAQAVLLGISMGFVTWPPFAVVSRNLPHHRGLALGVITGGSSVGGIVWSIMIEELLTKRNLGFPWTVRVLGFTMLPLLAFACISITEPPKQSQPQPRPALEATVEGGSASPTPKPEYASLPLLRSTVFISICVGFGLAFLGLFNPFFYISSYAAGHGASAQTSSYMISIMNAATLFGRVIPGIVADRVGHYNVMIFVLLASGITSFCWTEVRSLTGLVIWSIAYGFSSGAILSLQGACAGKIATPQNQGKAIGFLQGSLAVTVLVGSPIGGQLLGHYGYLSLSMFTGATLVMGAVVMGYARLCLNRSPMEAHQFRFLLAPN.

A run of 12 helical transmembrane segments spans residues 21–41, 60–80, 87–107, 112–132, 145–165, 182–202, 240–260, 278–298, 301–321, 327–347, 364–384, and 393–413; these read VIGG…FGVF, WIGS…GVLV, VLLI…SLCS, IFLA…WPPF, LALG…SIMI, VLGF…TEPP, VFIS…NPFF, YMIS…GIVA, VGHY…SFCW, LTGL…ILSL, AIGF…PIGG, and LSLS…MGYA. Residues 201-225 are disordered; it reads PPKQSQPQPRPALEATVEGGSASPT.

It belongs to the major facilitator superfamily. Monocarboxylate porter (TC 2.A.1.13) family.

It is found in the cell membrane. In terms of biological role, MFS-type transporter; part of the gene cluster that mediates the biosynthesis of fumigermin that inhibits germination of spores of the inducing S.rapamycinicus, and thus helps the fungus to defend resources in the shared habitat against a bacterial competitor. May be involved in the secretion of fumigermin. This Aspergillus fumigatus (strain ATCC MYA-4609 / CBS 101355 / FGSC A1100 / Af293) (Neosartorya fumigata) protein is MFS-type transporter AFUA_1G00970.